We begin with the raw amino-acid sequence, 74 residues long: uncharacterized protein (74 aa).

This is an uncharacterized protein from Avena sativa (Oat).